A 510-amino-acid polypeptide reads, in one-letter code: Histidine ammonia-lyase (510 aa).

A cross-link (5-imidazolinone (Ala-Gly)) is located at residues 143 to 145 (ASG). The residue at position 144 (Ser-144) is a 2,3-didehydroalanine (Ser).

Belongs to the PAL/histidase family. Contains an active site 4-methylidene-imidazol-5-one (MIO), which is formed autocatalytically by cyclization and dehydration of residues Ala-Ser-Gly.

Its subcellular location is the cytoplasm. It carries out the reaction L-histidine = trans-urocanate + NH4(+). Its pathway is amino-acid degradation; L-histidine degradation into L-glutamate; N-formimidoyl-L-glutamate from L-histidine: step 1/3. This Pseudomonas putida (strain ATCC 47054 / DSM 6125 / CFBP 8728 / NCIMB 11950 / KT2440) protein is Histidine ammonia-lyase.